Consider the following 495-residue polypeptide: MNINVAAFRTPPTKQTDHADQILGTDSESRRVFRNAMLQAIDMVVDQTAAASSLYSGTSFQGLRGLIDDLDPLPEVGTGIAAALAEIGRPALEHAMVVGHPAAMAHLHCPVAVPALAAEVLISATNQSLDSWDQSPFATLVEERVLACLTQLAELPASASGNFTSGGTQSNMTALYLAAVRCGPDARKAGVVLTSAHAHFSIRKSAAILGFAEDAVIAIAADADGRMSVPALKAELLRVAGEGRIPVAVVATAGTTDLGAIDPLVEIADLAAAQNVWMHVDAAYGGGLLFSRHRSRLEGLEHAHSITLDFHKMLFQPISCGVLLLRDRADFAPLASKADYLNPEDAVFADAPNLVERSMQTTRRADALKILMTMRAIGRDGLDALICQTLQNTHAAAEAVKTREYLSLAGPPSLSTVLFRYVSARGPKFADAITLKTRAALFNAGIAALATTVLDGRVHFKLTLLNPRSTPDVVHRILDAIGETARELETHHARP.

N6-(pyridoxal phosphate)lysine is present on K312.

This sequence belongs to the group II decarboxylase family. The cofactor is pyridoxal 5'-phosphate.

The catalysed reaction is L-2,4-diaminobutanoate + H(+) = propane-1,3-diamine + CO2. Its pathway is siderophore biosynthesis; rhizobactin biosynthesis. This is L-2,4-diaminobutyrate decarboxylase (rhbB) from Rhizobium meliloti (strain 1021) (Ensifer meliloti).